Reading from the N-terminus, the 407-residue chain is Na(+)-translocating NADH-quinone reductase subunit F (407 aa).

The chain crosses the membrane as a helical span at residues Ile3–Phe23. Positions Gly32 to Ile126 constitute a 2Fe-2S ferredoxin-type domain. Positions 69, 75, 78, and 110 each coordinate [2Fe-2S] cluster. The 141-residue stretch at Val129–Lys269 folds into the FAD-binding FR-type domain.

It belongs to the NqrF family. Composed of six subunits; NqrA, NqrB, NqrC, NqrD, NqrE and NqrF. Requires [2Fe-2S] cluster as cofactor. FAD serves as cofactor.

It localises to the cell inner membrane. It catalyses the reaction a ubiquinone + n Na(+)(in) + NADH + H(+) = a ubiquinol + n Na(+)(out) + NAD(+). Its function is as follows. NQR complex catalyzes the reduction of ubiquinone-1 to ubiquinol by two successive reactions, coupled with the transport of Na(+) ions from the cytoplasm to the periplasm. The first step is catalyzed by NqrF, which accepts electrons from NADH and reduces ubiquinone-1 to ubisemiquinone by a one-electron transfer pathway. The polypeptide is Na(+)-translocating NADH-quinone reductase subunit F (Yersinia enterocolitica serotype O:8 / biotype 1B (strain NCTC 13174 / 8081)).